A 326-amino-acid chain; its full sequence is Undecaprenyl-phosphate 4-deoxy-4-formamido-L-arabinose transferase (326 aa).

A run of 2 helical transmembrane segments spans residues 235–255 (LLSV…VLLI) and 270–290 (VFTL…GMGL).

The protein belongs to the glycosyltransferase 2 family.

The protein resides in the cell inner membrane. It carries out the reaction UDP-4-deoxy-4-formamido-beta-L-arabinose + di-trans,octa-cis-undecaprenyl phosphate = 4-deoxy-4-formamido-alpha-L-arabinopyranosyl di-trans,octa-cis-undecaprenyl phosphate + UDP. The protein operates within glycolipid biosynthesis; 4-amino-4-deoxy-alpha-L-arabinose undecaprenyl phosphate biosynthesis; 4-amino-4-deoxy-alpha-L-arabinose undecaprenyl phosphate from UDP-4-deoxy-4-formamido-beta-L-arabinose and undecaprenyl phosphate: step 1/2. It functions in the pathway bacterial outer membrane biogenesis; lipopolysaccharide biosynthesis. Functionally, catalyzes the transfer of 4-deoxy-4-formamido-L-arabinose from UDP to undecaprenyl phosphate. The modified arabinose is attached to lipid A and is required for resistance to polymyxin and cationic antimicrobial peptides. The chain is Undecaprenyl-phosphate 4-deoxy-4-formamido-L-arabinose transferase from Serratia proteamaculans (strain 568).